The following is a 1040-amino-acid chain: MQESSPIHGGGPSRLFILRPVATTLLMVAILLAGLVGYRALPVSALPEVDYPTIQVVTLYPGASPDVMTSSVTAPLEHQFGSMSGLKQMSSQSSAGASVITLQFQLTLSLDVAEQDVQAAINAATNLLPTDLPFPPTYNKVNPADPPIMTLAVTSTAMPMTQVQDMLETRIAQKISQVEGVGLVTLAGGQRPSVRVKLNAGALASFGLSSESVRTAITAANVNTPKGSFDGPTRSVTLSANDQIRSVDDYRQLIITWKNNAPVRLQDVATVEQAPENTKLAAWANQNQAIILNIQRQPGANVIATADHIRNLLPTLQASLPKSVNVTLLADRTTTIRASVDDVQFELLLAIALVVMVIYLFLRNAVATLIPSIAVPLSLVGTFAAMYFLGFSVNNLTLMALTIATGFVVDDAIVVIENIARYIEKGEKPLDAALKGAGEIGFTIISLTFSLIAVLIPLLFMGDIIGRLFREFAVTLAVSILISAIVSLTLTPMMCARLLNHEALAHQNRFTRASERFFDWVIAAYGRGLTRVLSHPWITLSVAIGTLVLTVLLYIVIPKGFFPIQDNGIIQGTVQAAQTISFNSMVDKQHQVTDAILKDPTVESVSSFIGVDGTNPSLNSGRLQINLKPFSERSERVQTIIDRLQQQAAAIPGVQLYLQPVQDLTIDTQVSRTQYQFTLQTMSLDELGVWVPKLTAELQKLPQLQDVSSDWQDGAAVAYVKVDRDNASRLGITMSQIDSALYNAFGQRLISTIYTQSNQYRVVLEQHSPNKTGLDPLHDIRLVNSTGGVVPLDSIATIEERNGTLAVNHIDQFPSSTISFNVAPGYALGDAVKAIETTQQQMQLPSDIITRFQGSTLAFQAALTSTIWLVVAAIVAMYIVLGVLYESFIHPVTILSTLPTAGVGALLALMISGSDLNIIAIIGIILLIGIVKKNAIMMIDFALAAEREHGMSPYQAIYQACLLRFRPILMTTMAALLSAVPLMFSTGVGAELRRPLGICMVGGLVMSQVLTLFTTPVIYLLFDRLAHRLRRPRPQEGEAQ.

The next 12 helical transmembrane spans lie at 16–36 (FILR…AGLV), 342–362 (DVQF…YLFL), 373–393 (IAVP…GFSV), 396–416 (LTLM…IVVI), 440–460 (IGFT…PLLF), 472–492 (FAVT…TLTP), 537–557 (WITL…YIVI), 865–885 (STIW…GVLY), 888–908 (FIHP…ALLA), 911–931 (ISGS…IGIV), 968–988 (ILMT…STGV), and 1002–1022 (GGLV…YLLF).

This sequence belongs to the resistance-nodulation-cell division (RND) (TC 2.A.6) family. MdtB subfamily. As to quaternary structure, part of a tripartite efflux system composed of MdtA, MdtB and MdtC. MdtB forms a heteromultimer with MdtC.

The protein resides in the cell inner membrane. The chain is Multidrug resistance protein MdtB from Musicola paradisiaca (strain Ech703) (Dickeya paradisiaca).